The chain runs to 145 residues: Cytochrome b (145 aa).

A helical transmembrane segment spans residues 38-58; the sequence is FFALHFLLPFVLAALVIMHLI. Heme b contacts are provided by His42 and His56. Residue His61 participates in a ubiquinone binding. The helical transmembrane segment at 85 to 105 threads the bilayer; that stretch reads FVFKDLVTVFIFFIVLSVFVF.

Belongs to the cytochrome b family. In terms of assembly, fungal cytochrome b-c1 complex contains 10 subunits; 3 respiratory subunits, 2 core proteins and 5 low-molecular weight proteins. Cytochrome b-c1 complex is a homodimer. Heme b is required as a cofactor.

The protein localises to the mitochondrion inner membrane. In terms of biological role, component of the ubiquinol-cytochrome c reductase complex (complex III or cytochrome b-c1 complex) that is part of the mitochondrial respiratory chain. The b-c1 complex mediates electron transfer from ubiquinol to cytochrome c. Contributes to the generation of a proton gradient across the mitochondrial membrane that is then used for ATP synthesis. The sequence is that of Cytochrome b (cob) from Aspergillus fumigatus (Neosartorya fumigata).